The primary structure comprises 315 residues: 2-oxoglutarate and iron-dependent oxygenase domain-containing protein 3 (315 aa).

The disordered stretch occupies residues 1–32 (MAPQRRGPPRVPEGNSAAERRHANSTKKDRLP). Residues 1 to 41 (MAPQRRGPPRVPEGNSAAERRHANSTKKDRLPQEAQRTWLR) are Cytoplasmic-facing. A compositionally biased stretch (basic and acidic residues) spans 18 to 32 (AERRHANSTKKDRLP). The chain crosses the membrane as a helical; Signal-anchor for type II membrane protein span at residues 42 to 62 (IVALGVSLALVTFLLWSSAGI). Residues 63 to 315 (DDDVAEVVAH…DHGIEDPVLT (253 aa)) lie on the Lumenal side of the membrane. Residues 203-305 (KPTFFSRINS…AITIAFTCNP (103 aa)) enclose the Fe2OG dioxygenase domain. A glycan (N-linked (GlcNAc...) asparagine) is linked at asparagine 211. Fe cation contacts are provided by histidine 226 and aspartate 228. A glycan (N-linked (GlcNAc...) asparagine) is linked at asparagine 263. Histidine 284 is a Fe cation binding site. Arginine 294 is an active-site residue. Residue arginine 294 coordinates 2-oxoglutarate.

It belongs to the OGFOD3 family. Fe(2+) is required as a cofactor. L-ascorbate serves as cofactor.

It localises to the membrane. This chain is 2-oxoglutarate and iron-dependent oxygenase domain-containing protein 3 (Ogfod3), found in Rattus norvegicus (Rat).